A 274-amino-acid chain; its full sequence is Large ribosomal subunit protein uL2 (274 aa).

A disordered region spans residues 224-274 (AMNPVDHPHGGGEGRTGEGQVPVSPWNTMTKGYRTRSNKRTQTFIVSRRKK). Over residues 229–239 (DHPHGGGEGRT) the composition is skewed to basic and acidic residues.

It belongs to the universal ribosomal protein uL2 family. Part of the 50S ribosomal subunit. Forms a bridge to the 30S subunit in the 70S ribosome.

One of the primary rRNA binding proteins. Required for association of the 30S and 50S subunits to form the 70S ribosome, for tRNA binding and peptide bond formation. It has been suggested to have peptidyltransferase activity; this is somewhat controversial. Makes several contacts with the 16S rRNA in the 70S ribosome. This chain is Large ribosomal subunit protein uL2, found in Methylibium petroleiphilum (strain ATCC BAA-1232 / LMG 22953 / PM1).